A 121-amino-acid chain; its full sequence is Flagellar hook-basal body complex protein FliE (121 aa).

Belongs to the FliE family.

It localises to the bacterial flagellum basal body. The protein is Flagellar hook-basal body complex protein FliE of Saccharophagus degradans (strain 2-40 / ATCC 43961 / DSM 17024).